The primary structure comprises 1894 residues: Fibronectin type III domain-containing protein 1 (1894 aa).

A signal peptide spans 1-32 (MAPEAGATLRAPRRLSWAALLLLAALLPVASS). Positions 39–131 (HPLKPRHVKL…PVYRAESPPG (93 aa)) constitute a Fibronectin type-III 1 domain. Asparagine 149 is a glycosylation site (N-linked (GlcNAc...) asparagine). Fibronectin type-III domains follow at residues 158–258 (PNKP…SEED), 262–357 (VPDD…TPES), and 362–457 (APEN…MPTT). 4 disordered regions span residues 455–500 (PTTS…PQGR), 515–1271 (ANGG…TVSP), 1311–1350 (LSRQ…IING), and 1444–1515 (THPP…CPPG). Residues 565 to 574 (TLRPPSRHGH) are compositionally biased toward basic residues. Residues 614 to 625 (PSASASPAHHAS) show a composition bias toward low complexity. A compositionally biased stretch (polar residues) spans 626–641 (TQGTSHRPSLPASLND). Low complexity-rich tracts occupy residues 711-722 (SASAPPSRLSPP) and 759-778 (SRST…TQVS). A Phosphoserine modification is found at serine 717. The segment covering 786 to 799 (GESHGDGDREDGGR) has biased composition (basic and acidic residues). 2 stretches are compositionally biased toward polar residues: residues 941–957 (KYSS…QSTD) and 1027–1060 (SPSQ…TASS). Acidic residues predominate over residues 1071–1088 (QDEDAQGSYDDDSTEVEA). The segment covering 1166 to 1176 (PLSSKSQQSVS) has biased composition (polar residues). The span at 1197 to 1209 (SSSVPKWPSSSTP) shows a compositional bias: low complexity. The span at 1211 to 1226 (GGKDADGSLAKEEREP) shows a compositional bias: basic and acidic residues. Positions 1445-1504 (HPPTTTMQPTTTTTPLPTTTTPRPTTATTRRTTTTRRTTTRRPTTTVRTTTRTTTTTTPT) are enriched in low complexity. Residues 1658–1752 (APRNITVVAV…PSVSFVTESD (95 aa)) enclose the Fibronectin type-III 5 domain. An N-linked (GlcNAc...) asparagine glycan is attached at asparagine 1661.

Almost absent from healthy skin; especially in epidermal keratinocytes, skin fibroblasts or endothelial cells and is barely detectable in benign melanocytic naevi. Expressed in the stroma close to skin tumors, in the tumor cells themselves and in the epidermis of psoriasis.

It localises to the secreted. May be an activator of G protein signaling. The protein is Fibronectin type III domain-containing protein 1 (FNDC1) of Homo sapiens (Human).